Here is a 282-residue protein sequence, read N- to C-terminus: MAHQLKLLKDDFFASDQQAVAVADRYPQDVFAEHTHDFCELVIVWRGNGLHVLNDRPYRITRGDLFYIHADDKHSYASVNDLVLQNIIYCPERLKLNLDWQGAIPGFNASAGQPHWRLGSMGMAQARQVIGQLEHESSQHVPFANEMAELLFGQLVMLLNRHRYTSDSLPPTSSETLLDKLITRLAASLKSPFALDKFCDEASCSERVLRQQFRQQTGMTINQYLRQVRVCHAQYLLQHSRLLISDISTECGFEDSNYFSVVFTRETGMTPSQWRHLNSQKD.

The HTH araC/xylS-type domain maps to 179–277 (DKLITRLAAS…GMTPSQWRHL (99 aa)). 2 DNA-binding regions (H-T-H motif) span residues 196–217 (DKFC…RQQT) and 244–267 (ISDI…TRET).

Binds DNA as a dimer.

The protein localises to the cytoplasm. In terms of biological role, activates expression of the rhaSR operon in response to L-rhamnose. This Escherichia coli (strain K12 / MC4100 / BW2952) protein is HTH-type transcriptional activator RhaR.